The primary structure comprises 272 residues: Aquaporin-11 (272 aa).

At 1–14 (MTALRALWSEMQDT) the chain is on the cytoplasmic side. The chain crosses the membrane as a helical span at residues 15-35 (CTSLGLMLSVVLLAGLARVVA). At 36–47 (RQQQLHRPMAHA) the chain is on the lumenal side. A helical membrane pass occupies residues 48–68 (FVLEFLATLQLCCCTHELLLL). The Cytoplasmic portion of the chain corresponds to 69 to 75 (SEQEPAH). The helical transmembrane segment at 76–96 (PTWPLTLIYFFTLVHGLTLVG) threads the bilayer. The Lumenal portion of the chain corresponds to 97–167 (TSSNPCGVMM…NPIQVDLPKA (71 aa)). An NPC motif is present at residues 100 to 102 (NPC). Residues 168–188 (VIVEALCSFIFHSALLNFQEV) traverse the membrane as a helical segment. Over 189–195 (RPKLRIH) the chain is Cytoplasmic. A helical transmembrane segment spans residues 196–216 (LLAALITFLVYAGGSLTGAVF). Residues 217-219 (NPA) carry the NPA motif. Residues 217-235 (NPALALSLHFKCFDEAFLQ) lie on the Lumenal side of the membrane. The helical transmembrane segment at 236 to 256 (FFIVYWLAPSLGILLMILMFS) threads the bilayer. The Cytoplasmic segment spans residues 257–272 (FFLPWLYNNHTINKKE).

It belongs to the MIP/aquaporin (TC 1.A.8) family. AQP11/AQP12 subfamily. As to quaternary structure, homodimer; disulfide-linked. Homotetramer. Can also form homomultimer. Post-translationally, not glycosylated. As to expression, expressed in retina specifically at retinal Mueller glial cells.

The protein localises to the endoplasmic reticulum membrane. Its subcellular location is the cytoplasmic vesicle membrane. It localises to the cell membrane. It carries out the reaction H2O(in) = H2O(out). It catalyses the reaction glycerol(in) = glycerol(out). The enzyme catalyses H2O2(out) = H2O2(in). Channel protein that facilitates the transport of water, glycerol and hydrogen peroxide across membrane of cell or organelles guaranteeing intracellular homeostasis in several organes like liver, kidney and brain. In situation of stress, participates in endoplasmic reticulum (ER) homeostasis by regulating redox homeostasis through the transport of hydrogen peroxide across the endoplasmic reticulum membrane thereby regulating the oxidative stress through the NADPH oxidase 2 pathway. Plays a role by maintaining an environment suitable for translation or protein foldings in the ER lumen namely by participating in the PKD1 glycosylation processing resulting in regulation of PKD1 membrane trafficking thereby preventing the accumulation of unfolding protein in ER. Plays a role in the proximal tubule function by regulating its endosomal acidification. May play a role in postnatal kidney development. This Equus caballus (Horse) protein is Aquaporin-11.